We begin with the raw amino-acid sequence, 79 residues long: Protein OPG051 (79 aa).

This sequence belongs to the orthopoxvirus OPG051 family.

This Variola virus (isolate Human/India/Ind3/1967) (VARV) protein is Protein OPG051 (OPG051).